The sequence spans 341 residues: DNA-directed RNA polymerase subunit alpha (341 aa).

The alpha N-terminal domain (alpha-NTD) stretch occupies residues 1-233 (MVREEVPVST…DLFIPFLHAE (233 aa)). An alpha C-terminal domain (alpha-CTD) region spans residues 266-341 (IILKRIFIDQ…LKNSNQFESR (76 aa)).

Belongs to the RNA polymerase alpha chain family. In terms of assembly, in plastids the minimal PEP RNA polymerase catalytic core is composed of four subunits: alpha, beta, beta', and beta''. When a (nuclear-encoded) sigma factor is associated with the core the holoenzyme is formed, which can initiate transcription.

It localises to the plastid. It is found in the chloroplast. The catalysed reaction is RNA(n) + a ribonucleoside 5'-triphosphate = RNA(n+1) + diphosphate. DNA-dependent RNA polymerase catalyzes the transcription of DNA into RNA using the four ribonucleoside triphosphates as substrates. This is DNA-directed RNA polymerase subunit alpha from Nymphaea alba (White water-lily).